The chain runs to 654 residues: DNA ligase (654 aa).

Residues 34-38 (DLEYD), 83-84 (SL), and Glu-114 contribute to the NAD(+) site. Lys-116 serves as the catalytic N6-AMP-lysine intermediate. Residues Arg-137, Glu-171, Lys-280, and Lys-304 each coordinate NAD(+). Positions 396, 399, 414, and 419 each coordinate Zn(2+). In terms of domain architecture, BRCT spans 577-654 (VISTILSGYT…EEQFYDLIKQ (78 aa)).

It belongs to the NAD-dependent DNA ligase family. LigA subfamily. It depends on Mg(2+) as a cofactor. Mn(2+) serves as cofactor.

The catalysed reaction is NAD(+) + (deoxyribonucleotide)n-3'-hydroxyl + 5'-phospho-(deoxyribonucleotide)m = (deoxyribonucleotide)n+m + AMP + beta-nicotinamide D-nucleotide.. Its function is as follows. DNA ligase that catalyzes the formation of phosphodiester linkages between 5'-phosphoryl and 3'-hydroxyl groups in double-stranded DNA using NAD as a coenzyme and as the energy source for the reaction. It is essential for DNA replication and repair of damaged DNA. This Mycoplasmopsis agalactiae (strain NCTC 10123 / CIP 59.7 / PG2) (Mycoplasma agalactiae) protein is DNA ligase.